The primary structure comprises 225 residues: Urease accessory protein UreF (225 aa).

It belongs to the UreF family. UreD, UreF and UreG form a complex that acts as a GTP-hydrolysis-dependent molecular chaperone, activating the urease apoprotein by helping to assemble the nickel containing metallocenter of UreC. The UreE protein probably delivers the nickel.

The protein localises to the cytoplasm. In terms of biological role, required for maturation of urease via the functional incorporation of the urease nickel metallocenter. The protein is Urease accessory protein UreF of Thermosynechococcus vestitus (strain NIES-2133 / IAM M-273 / BP-1).